The chain runs to 677 residues: UvrABC system protein B (677 aa).

The 389-residue stretch at 24–412 (EGVLQGVPAQ…EGIVVEQVIR (389 aa)) folds into the Helicase ATP-binding domain. 37–44 (GVTGSGKT) is a binding site for ATP. The Beta-hairpin motif lies at 90–113 (YYDYYQPEAYLPNSDTYIEKDLAI). Residues 429-591 (QIDDLMEEIQ…ITPQQIKKAR (163 aa)) enclose the Helicase C-terminal domain. The 36-residue stretch at 636–671 (EKSIERTRKLMQEAAKKLEFIEAAQYRNELLKLEDL) folds into the UVR domain.

It belongs to the UvrB family. Forms a heterotetramer with UvrA during the search for lesions. Interacts with UvrC in an incision complex.

The protein resides in the cytoplasm. The UvrABC repair system catalyzes the recognition and processing of DNA lesions. A damage recognition complex composed of 2 UvrA and 2 UvrB subunits scans DNA for abnormalities. Upon binding of the UvrA(2)B(2) complex to a putative damaged site, the DNA wraps around one UvrB monomer. DNA wrap is dependent on ATP binding by UvrB and probably causes local melting of the DNA helix, facilitating insertion of UvrB beta-hairpin between the DNA strands. Then UvrB probes one DNA strand for the presence of a lesion. If a lesion is found the UvrA subunits dissociate and the UvrB-DNA preincision complex is formed. This complex is subsequently bound by UvrC and the second UvrB is released. If no lesion is found, the DNA wraps around the other UvrB subunit that will check the other stand for damage. This Bacteroides thetaiotaomicron (strain ATCC 29148 / DSM 2079 / JCM 5827 / CCUG 10774 / NCTC 10582 / VPI-5482 / E50) protein is UvrABC system protein B.